The primary structure comprises 286 residues: ATP synthase gamma chain (286 aa).

The protein belongs to the ATPase gamma chain family. In terms of assembly, F-type ATPases have 2 components, CF(1) - the catalytic core - and CF(0) - the membrane proton channel. CF(1) has five subunits: alpha(3), beta(3), gamma(1), delta(1), epsilon(1). CF(0) has three main subunits: a, b and c.

The protein resides in the cell inner membrane. Produces ATP from ADP in the presence of a proton gradient across the membrane. The gamma chain is believed to be important in regulating ATPase activity and the flow of protons through the CF(0) complex. The polypeptide is ATP synthase gamma chain (Shewanella oneidensis (strain ATCC 700550 / JCM 31522 / CIP 106686 / LMG 19005 / NCIMB 14063 / MR-1)).